Reading from the N-terminus, the 209-residue chain is Uracil phosphoribosyltransferase (209 aa).

5-phospho-alpha-D-ribose 1-diphosphate-binding positions include Arg-79, Arg-104, and 131–139; that span reads DPMLATGVS. Uracil contacts are provided by residues Ile-194 and 199–201; that span reads GDA. 5-phospho-alpha-D-ribose 1-diphosphate is bound at residue Asp-200.

This sequence belongs to the UPRTase family. It depends on Mg(2+) as a cofactor.

The enzyme catalyses UMP + diphosphate = 5-phospho-alpha-D-ribose 1-diphosphate + uracil. It functions in the pathway pyrimidine metabolism; UMP biosynthesis via salvage pathway; UMP from uracil: step 1/1. Its activity is regulated as follows. Allosterically activated by GTP. Catalyzes the conversion of uracil and 5-phospho-alpha-D-ribose 1-diphosphate (PRPP) to UMP and diphosphate. In Thermotoga maritima (strain ATCC 43589 / DSM 3109 / JCM 10099 / NBRC 100826 / MSB8), this protein is Uracil phosphoribosyltransferase.